A 420-amino-acid polypeptide reads, in one-letter code: COP9 signalosome complex subunit 5 (420 aa).

The MPN domain maps to 73–208 (AALSALACMK…IGAFRTMPET (136 aa)). Zn(2+) contacts are provided by histidine 154, histidine 156, and aspartate 167. Residues 154–167 (HSHPGYGCWLSGID) carry the JAMM motif motif.

This sequence belongs to the peptidase M67A family. CSN5 subfamily. In terms of assembly, component of the COP9 signalosome (CSN) complex.

It is found in the cytoplasm. Its subcellular location is the nucleus. Functionally, catalytic component of the COP9 signalosome (CSN) complex that acts as an regulator of the ubiquitin (Ubl) conjugation pathway by mediating the deneddylation of the cullin subunit of SCF-type E3 ubiquitin-protein ligase complexes. The CSN complex is involved in the regulation of the mating pheromone response. The sequence is that of COP9 signalosome complex subunit 5 (RRI1) from Eremothecium gossypii (strain ATCC 10895 / CBS 109.51 / FGSC 9923 / NRRL Y-1056) (Yeast).